The sequence spans 266 residues: Proteasome subunit alpha type-1 (266 aa).

Belongs to the peptidase T1A family. The 26S proteasome consists of a 20S proteasome core and two 19S regulatory subunits. The 20S proteasome core is composed of 28 subunits that are arranged in four stacked rings, resulting in a barrel-shaped structure. The two end rings are each formed by seven alpha subunits, and the two central rings are each formed by seven beta subunits. The catalytic chamber with the active sites is on the inside of the barrel.

The protein resides in the cytoplasm. It localises to the nucleus. In terms of biological role, the proteasome is a multicatalytic proteinase complex which is characterized by its ability to cleave peptides with Arg, Phe, Tyr, Leu, and Glu adjacent to the leaving group at neutral or slightly basic pH. The proteasome has an ATP-dependent proteolytic activity. This Trypanosoma brucei brucei protein is Proteasome subunit alpha type-1.